The primary structure comprises 84 residues: Transmembrane protein EP84R (84 aa).

2 helical membrane passes run 31–51 (VIGVILLVISLLFIFIGIIIL) and 60–80 (AASIFIVLSLILGGGGFFLIY).

Belongs to the asfivirus EP84R family.

The protein resides in the virion membrane. The protein is Transmembrane protein EP84R of Ornithodoros (relapsing fever ticks).